Consider the following 256-residue polypeptide: Homeobox-leucine zipper protein HOX28 (256 aa).

The interval 56-86 is disordered; sequence ACSPGSPVSSGSGKRGSGSGSGDEVDDAGCD. A compositionally biased stretch (low complexity) spans 58 to 67; that stretch reads SPGSPVSSGS. Residues 91–150 constitute a DNA-binding region (homeobox); it reads GARKKLRLSKDQAAVLEECFKTHHTLTPKQKVALAKSLNLRPRQVEVWFQNRRARTKLKQ. The tract at residues 149–193 is leucine-zipper; sequence KQTEVDCEHLKRWCDQLADDNRRLHKELAELRALKATPTPPAAAP.

It belongs to the HD-ZIP homeobox family. Class II subfamily. In terms of tissue distribution, expressed in seedlings, roots, stems and panicles.

Its subcellular location is the nucleus. Functionally, probable transcription factor. The polypeptide is Homeobox-leucine zipper protein HOX28 (HOX28) (Oryza sativa subsp. indica (Rice)).